A 492-amino-acid polypeptide reads, in one-letter code: Gamma-aminobutyric acid receptor subunit alpha-3 (492 aa).

Residues 1–28 (MIITQTSHCYMTSLGILFLINILPGTTG) form the signal peptide. The segment at 28–54 (GQGESRRQEPGDFVKQDIGGLSPKHAP) is disordered. At 29-274 (QGESRRQEPG…MTTHFHLKRK (246 aa)) the chain is on the extracellular side. Over residues 31 to 42 (ESRRQEPGDFVK) the composition is skewed to basic and acidic residues. An N-linked (GlcNAc...) asparagine glycan is attached at Asn63. Residue Arg119 coordinates 4-aminobutanoate. N-linked (GlcNAc...) asparagine glycosylation is found at Asn163 and Asn176. A 4-aminobutanoate-binding site is contributed by Thr182. The cysteines at positions 191 and 205 are disulfide-linked. The N-linked (GlcNAc...) asparagine glycan is linked to Asn228. A helical membrane pass occupies residues 275–295 (IGYFVIQTYLPCIMTVILSQV). Over 296-305 (SFWLNRESVP) the chain is Cytoplasmic. A helical transmembrane segment spans residues 306–325 (ARTVFGVTTVLTMTTLSISA). At 326–336 (RNSLPKVAYAT) the chain is on the extracellular side. The helical transmembrane segment at 337–357 (AMDWFIAVCYAFVFSALIEFA) threads the bilayer. Residues 358-457 (TVNYFTKRSW…TYNSVSKVDK (100 aa)) are Cytoplasmic-facing. Ser426 is modified (phosphoserine). Position 427 is a phosphothreonine (Thr427). Phosphoserine is present on residues Ser433 and Ser442. Residues 458-478 (ISRIIFPVLFAIFNLVYWATY) form a helical membrane-spanning segment. Over 479–492 (VNRESAIKGMIRKQ) the chain is Extracellular.

This sequence belongs to the ligand-gated ion channel (TC 1.A.9) family. Gamma-aminobutyric acid receptor (TC 1.A.9.5) subfamily. GABRA3 sub-subfamily. In terms of assembly, heteropentamer, formed by a combination of alpha (GABRA1-6), beta (GABRB1-3), gamma (GABRG1-3), delta (GABRD), epsilon (GABRE), rho (GABRR1-3), pi (GABRP) and theta (GABRQ) chains, each subunit exhibiting distinct physiological and pharmacological properties. Binds UBQLN1. Interacts with GPHN.

It is found in the postsynaptic cell membrane. Its subcellular location is the cell membrane. It catalyses the reaction chloride(in) = chloride(out). With respect to regulation, potentiated by etomidate, propofol, pregnanolone and flurazepam. Functionally, alpha subunit of the heteropentameric ligand-gated chloride channel gated by gamma-aminobutyric acid (GABA), a major inhibitory neurotransmitter in the brain. GABA-gated chloride channels, also named GABA(A) receptors (GABAAR), consist of five subunits arranged around a central pore and contain GABA active binding site(s) located at the alpha and beta subunit interface(s). When activated by GABA, GABAARs selectively allow the flow of chloride anions across the cell membrane down their electrochemical gradient. Chloride influx into the postsynaptic neuron following GABAAR opening decreases the neuron ability to generate a new action potential, thereby reducing nerve transmission. This is Gamma-aminobutyric acid receptor subunit alpha-3 from Homo sapiens (Human).